A 44-amino-acid chain; its full sequence is Large ribosomal subunit protein bL34 (44 aa).

The disordered stretch occupies residues 1 to 26 (MKMTFQPKKRQRAKVHGFRQRMKTAG). The span at 7-22 (PKKRQRAKVHGFRQRM) shows a compositional bias: basic residues.

The protein belongs to the bacterial ribosomal protein bL34 family.

In Agathobacter rectalis (strain ATCC 33656 / DSM 3377 / JCM 17463 / KCTC 5835 / VPI 0990) (Eubacterium rectale), this protein is Large ribosomal subunit protein bL34.